Reading from the N-terminus, the 393-residue chain is MSEQLLSELSPVAATSPSPAPAAQQKLNLLDMNRQQLREFFSSMGEKPFRADQVMKWIYHYCCDDFDQMTDINKHLRARLKALAEIRAPEVAEEQRSADGTIKWAIKVGDQQVETVYIPEDDRATLCVSSQVGCALQCTFCSTAQQGFNRNLRVSEIIGQVWRAAKIIGAAKVTGQRPITNVVMMGMGEPLLNLTNVVPAMEIMLDDFGFGLSKRRVTLSTSGVVPALEKLGDMIDVALAISLHAPNDTIRDEIVPINRKYNIETFLSAVRCYLDKSNANKGRVTVEYVMLDHINDGTEHAHQLAACLKYTPCKINLIPWNPFPGAPYGRSSNSRVDRFAKVLMGYEFTTIVRKTRGDDIDAACGQLAGEVIDRTKRTLRKRMNGESIEVKAV.

Positions Met-1–Ala-22 are disordered. Low complexity predominate over residues Ser-10–Ala-22. Residue Glu-114 is the Proton acceptor of the active site. Residues Glu-120–Asp-358 form the Radical SAM core domain. A disulfide bridge links Cys-127 with Cys-364. Residues Cys-134, Cys-138, and Cys-141 each coordinate [4Fe-4S] cluster. S-adenosyl-L-methionine contacts are provided by residues Gly-188 to Glu-189, Ser-220, Ser-242 to His-244, and Asn-321. Cys-364 serves as the catalytic S-methylcysteine intermediate.

This sequence belongs to the radical SAM superfamily. RlmN family. [4Fe-4S] cluster serves as cofactor.

Its subcellular location is the cytoplasm. The enzyme catalyses adenosine(2503) in 23S rRNA + 2 reduced [2Fe-2S]-[ferredoxin] + 2 S-adenosyl-L-methionine = 2-methyladenosine(2503) in 23S rRNA + 5'-deoxyadenosine + L-methionine + 2 oxidized [2Fe-2S]-[ferredoxin] + S-adenosyl-L-homocysteine. It catalyses the reaction adenosine(37) in tRNA + 2 reduced [2Fe-2S]-[ferredoxin] + 2 S-adenosyl-L-methionine = 2-methyladenosine(37) in tRNA + 5'-deoxyadenosine + L-methionine + 2 oxidized [2Fe-2S]-[ferredoxin] + S-adenosyl-L-homocysteine. Specifically methylates position 2 of adenine 2503 in 23S rRNA and position 2 of adenine 37 in tRNAs. m2A2503 modification seems to play a crucial role in the proofreading step occurring at the peptidyl transferase center and thus would serve to optimize ribosomal fidelity. This chain is Dual-specificity RNA methyltransferase RlmN, found in Sodalis glossinidius (strain morsitans).